Reading from the N-terminus, the 254-residue chain is Imidazole glycerol phosphate synthase subunit HisF (254 aa).

Catalysis depends on residues D12 and D131.

This sequence belongs to the HisA/HisF family. In terms of assembly, heterodimer of HisH and HisF.

Its subcellular location is the cytoplasm. The enzyme catalyses 5-[(5-phospho-1-deoxy-D-ribulos-1-ylimino)methylamino]-1-(5-phospho-beta-D-ribosyl)imidazole-4-carboxamide + L-glutamine = D-erythro-1-(imidazol-4-yl)glycerol 3-phosphate + 5-amino-1-(5-phospho-beta-D-ribosyl)imidazole-4-carboxamide + L-glutamate + H(+). The protein operates within amino-acid biosynthesis; L-histidine biosynthesis; L-histidine from 5-phospho-alpha-D-ribose 1-diphosphate: step 5/9. Functionally, IGPS catalyzes the conversion of PRFAR and glutamine to IGP, AICAR and glutamate. The HisF subunit catalyzes the cyclization activity that produces IGP and AICAR from PRFAR using the ammonia provided by the HisH subunit. This Rhizorhabdus wittichii (strain DSM 6014 / CCUG 31198 / JCM 15750 / NBRC 105917 / EY 4224 / RW1) (Sphingomonas wittichii) protein is Imidazole glycerol phosphate synthase subunit HisF.